A 626-amino-acid chain; its full sequence is ATP-dependent RNA helicase cyt-19, mitochondrial (626 aa).

The Q motif motif lies at 74–103 (ADLAALGVHENVVRAITHGMGYENMTEVQS). Residues 106–297 (ISPALKGKDI…RSYIDKNNFE (192 aa)) enclose the Helicase ATP-binding domain. An ATP-binding site is contributed by 119-126 (AKTGTGKT). A DEAD box motif is present at residues 241–244 (DEAD). The Helicase C-terminal domain occupies 329-493 (AMLELIEKAL…CASVNAADSG (165 aa)). The interval 569–626 (LRVETREHSMRPMGSGPGHRRDFNSRGPRRQSDDPFENALHRAQDLDRRPTRRQQASF) is disordered. Residues 578 to 626 (MRPMGSGPGHRRDFNSRGPRRQSDDPFENALHRAQDLDRRPTRRQQASF) form an RNA-binding region. A compositionally biased stretch (basic and acidic residues) spans 607 to 617 (ALHRAQDLDRR).

The protein belongs to the DEAD box helicase family.

Its subcellular location is the mitochondrion matrix. It carries out the reaction ATP + H2O = ADP + phosphate + H(+). With respect to regulation, activated by exposed helices in a group I intron RNA. Functionally, acts as an RNA chaperone to resolve non-native structures formed during RNA folding to promote mitochondrial group I, but also group II, intron splicing. Functions predominantly by disrupting accessible RNA secondary structure and depends on spontaneous openings in tightly packed RNAs to gain access to RNA helices. The polypeptide is ATP-dependent RNA helicase cyt-19, mitochondrial (Neurospora crassa (strain ATCC 24698 / 74-OR23-1A / CBS 708.71 / DSM 1257 / FGSC 987)).